The primary structure comprises 246 residues: Probable transcriptional regulatory protein Pden_1905 (246 aa).

A disordered region spans residues 1–21 (MAGHSKWANIQHRKGKQDKLR).

The protein belongs to the TACO1 family.

Its subcellular location is the cytoplasm. The polypeptide is Probable transcriptional regulatory protein Pden_1905 (Paracoccus denitrificans (strain Pd 1222)).